The chain runs to 3388 residues: Genome polyprotein (3388 aa).

Positions 1–15 (MNDQRKKARNTPFNM) are interaction with host EXOC1. Topologically, residues 1–101 (MNDQRKKARN…LNILNRRRRT (101 aa)) are cytoplasmic. The segment at 37-72 (MLQGRGPLKLFMALVAFLRFLTIPPTAGILKRWGTI) is hydrophobic; homodimerization of capsid protein C. Residues 101–114 (TAGMIIMLIPTVMA) constitute a propeptide, ER anchor for the capsid protein C, removed in mature form by serine protease NS3. The chain crosses the membrane as a helical span at residues 102–122 (AGMIIMLIPTVMAFHLTTRNG). The Extracellular segment spans residues 123 to 238 (EPHMIVSRQE…GAWKHAQRIE (116 aa)). N-linked (GlcNAc...) asparagine; by host glycosylation occurs at Asn183. A helical transmembrane segment spans residues 239–259 (TWILRHPGFTIMAAILAYTIG). Residues 260 to 265 (TTHFQR) are Cytoplasmic-facing. Residues 266-280 (VLIFILLTAIAPSMT) form a helical membrane-spanning segment. Residues 281–725 (MRCIGISNRD…LHQVFGAIYG (445 aa)) are Extracellular-facing. Disulfide bonds link Cys283–Cys310, Cys340–Cys401, Cys354–Cys385, and Cys372–Cys396. A glycan (N-linked (GlcNAc...) asparagine; by host) is linked at Asn347. Positions 378–391 (DRGWGNGCGLFGKG) are fusion peptide. Residue Asn433 is glycosylated (N-linked (GlcNAc...) asparagine; by host). 2 disulfide bridges follow: Cys465-Cys565 and Cys582-Cys613. The chain crosses the membrane as a helical span at residues 726–746 (AAFSGVSWTMKILIGVIITWI). Over 747 to 752 (GMNSRS) the chain is Cytoplasmic. The helical transmembrane segment at 753–773 (TSLSVSLVLVGIVTLYLGVMV) threads the bilayer. Residues 774–1195 (QADSGCVVSW…MVGATMTDDI (422 aa)) are Extracellular-facing. Cystine bridges form between Cys779-Cys790, Cys830-Cys918, Cys954-Cys998, Cys1055-Cys1104, Cys1066-Cys1088, and Cys1087-Cys1091. N-linked (GlcNAc...) asparagine; by host glycosylation is found at Asn905 and Asn982. N-linked (GlcNAc...) asparagine; by host glycosylation occurs at Asn1134. Residues 1196–1220 (GMGVTYLALLAAFKVRPTFAAGLLL) traverse the membrane as a helical segment. Residues 1221-1226 (RKLTSK) are Cytoplasmic-facing. Residues 1227 to 1245 (ELMMTTIGIVLLSQSSIPE) form a helical membrane-spanning segment. The Lumenal segment spans residues 1246–1269 (TILELTDALALGMMVLKMVRNMEK). Residues 1270–1290 (YQLAVTIMAILCVPNAVILQN) form a helical membrane-spanning segment. Position 1291 (Ala1291) is a topological domain, cytoplasmic. A helical transmembrane segment spans residues 1292-1310 (WKVSCTILAVVSVSPLFLT). The Lumenal portion of the chain corresponds to 1311–1317 (SSQQKAD). Residues 1318–1338 (WIPLALTIKGLNPTAIFLTTL) traverse the membrane as a helical segment. At 1339–1346 (SRTSKKRS) the chain is on the cytoplasmic side. A helical transmembrane segment spans residues 1347–1367 (WPLNEAIMAVGMVSILASSLL). Residues 1368–1370 (KND) lie on the Lumenal side of the membrane. A helical membrane pass occupies residues 1371 to 1391 (TPMTGPLVAGGLLTVCYVLTG). The Cytoplasmic segment spans residues 1392-1447 (RSADLELERATDVKWDDQAEISGSSPILSITISEDGSMSIKNEEEEQTLTILIRTG). Positions 1398–1437 (LERATDVKWDDQAEISGSSPILSITISEDGSMSIKNEEEE) are interacts with and activates NS3 protease. The helical intramembrane region spans 1448-1468 (LLVISGLFPVSIPITAAAWYL). The Cytoplasmic segment spans residues 1469–2144 (WEVKKQRAGV…LSELPETLET (676 aa)). Residues 1476 to 1653 (AGVLWDVPSP…EKSIEDNPEI (178 aa)) enclose the Peptidase S7 domain. Catalysis depends on charge relay system; for serine protease NS3 activity residues His1526, Asp1550, and Ser1610. A Helicase ATP-binding domain is found at 1655 to 1811 (DDIFRKRRLT…QSNAPIMDEE (157 aa)). Positions 1659–1662 (RKRR) are important for RNA-binding. An ATP-binding site is contributed by 1668-1675 (LHPGAGKT). Residues 1759 to 1762 (DEAH) carry the DEAH box motif. The Helicase C-terminal domain maps to 1821–1988 (SGHEWVTDFK…IIPSMFEPER (168 aa)). An N6-acetyllysine; by host modification is found at Lys1863. A helical membrane pass occupies residues 2145-2165 (LLLLTLLATVTGGIFLFLMSG). The Lumenal portion of the chain corresponds to 2166–2167 (RG). The helical intramembrane region spans 2168–2188 (IGKMTLGMCCIITASILLWYA). A topological domain (lumenal) is located at residue Gln2189. Residues 2190–2210 (IQPHWIAASIILEFFLIVLLI) form a helical membrane-spanning segment. Residues 2211–2225 (PEPEKQRTPQDNQLT) lie on the Cytoplasmic side of the membrane. A helical membrane pass occupies residues 2226 to 2246 (YVIIAILTVVAATMANEMGFL). Residues 2247 to 2271 (EKTKKDLGLGNIATQQPESNILDID) lie on the Lumenal side of the membrane. The segment at residues 2272 to 2292 (LRPASAWTLYAVATTFITPML) is an intramembrane region (helical). Residues 2293-2313 (RHSIENSSVNVSLTAIANQAT) are Lumenal-facing. 2 N-linked (GlcNAc...) asparagine; by host glycosylation sites follow: Asn2298 and Asn2302. Residues 2314–2334 (VLMGLGKGWPLSKMDIGVPLL) constitute an intramembrane region (helical). Topologically, residues 2335-2344 (AIGCYSQVNP) are lumenal. Residues 2345–2365 (ITLTAALLLLVAHYAIIGPGL) form a helical membrane-spanning segment. The Cytoplasmic segment spans residues 2366–2410 (QAKATREAQKRAAAGIMKNPTVDGITVIDLDPIPYDPKFEKQLGQ). The chain crosses the membrane as a helical span at residues 2411–2431 (VMLLVLCVTQVLMMRTTWALC). Topologically, residues 2432–2456 (EALTLATGPVSTLWEGNPGRFWNTT) are lumenal. Residue Asn2454 is glycosylated (N-linked (GlcNAc...) asparagine; by host). A helical transmembrane segment spans residues 2457–2477 (IAVSMANIFRGSYLAGAGLLF). At 2478-3388 (SIMKNTTSTR…REEEEAGVLW (911 aa)) the chain is on the cytoplasmic side. One can recognise an mRNA cap 0-1 NS5-type MT domain in the interval 2490 to 2752 (TGNIGETLGE…DVDLGSGTRN (263 aa)). Ser2544 contacts S-adenosyl-L-methionine. Position 2544 is a phosphoserine (Ser2544). Lys2549 acts as the For 2'-O-MTase activity in catalysis. An SUMO-interacting motif motif is present at residues 2565–2568 (VVDL). S-adenosyl-L-methionine is bound by residues Gly2574, Trp2575, Thr2592, Lys2593, Asp2619, and Val2620. Residue Asp2634 is the For 2'-O-MTase activity of the active site. Ile2635 serves as a coordination point for S-adenosyl-L-methionine. Catalysis depends on for 2'-O-MTase activity residues Lys2669 and Glu2705. Tyr2707 serves as a coordination point for S-adenosyl-L-methionine. 4 residues coordinate Zn(2+): Glu2926, His2930, Cys2935, and Cys2938. A RdRp catalytic domain is found at 3017–3166 (AMYADDTAGW…PLDDRFARAL (150 aa)). The Zn(2+) site is built by His3200, Cys3216, and Cys3335.

In the N-terminal section; belongs to the class I-like SAM-binding methyltransferase superfamily. mRNA cap 0-1 NS5-type methyltransferase family. As to quaternary structure, homodimer. Interacts (via N-terminus) with host EXOC1 (via C-terminus); this interaction results in EXOC1 degradation through the proteasome degradation pathway. Forms heterodimers with envelope protein E in the endoplasmic reticulum and Golgi. In terms of assembly, homodimer; in the endoplasmic reticulum and Golgi. Interacts with protein prM. Interacts with non-structural protein 1. As to quaternary structure, homodimer; Homohexamer when secreted. Interacts with envelope protein E. Interacts with host PRKAA1. Interacts (via N-terminus) with serine protease NS3. In terms of assembly, forms a heterodimer with serine protease NS3. May form homooligomers. As to quaternary structure, forms a heterodimer with NS2B. Interacts with NS4B. Interacts with unphosphorylated RNA-directed RNA polymerase NS5; this interaction stimulates RNA-directed RNA polymerase NS5 guanylyltransferase activity. Interacts with host SHFL. Interacts with host MAVS; this interaction inhibits the synthesis of IFN-beta. Interacts with host SHFL. Interacts with host AUP1; the interaction occurs in the presence of Dengue virus NS4B and induces lipophagy which facilitates production of virus progeny particles. May interact with host SRPRA and SEC61G. In terms of assembly, interacts with serine protease NS3. As to quaternary structure, homodimer. Interacts with host STAT2; this interaction inhibits the phosphorylation of the latter, and, when all viral proteins are present (polyprotein), targets STAT2 for degradation. Interacts with serine protease NS3. Interacts with host PAF1 complex; the interaction may prevent the recruitment of the PAF1 complex to interferon-responsive genes, and thus reduces the immune response. In terms of processing, specific enzymatic cleavages in vivo yield mature proteins. Cleavages in the lumen of endoplasmic reticulum are performed by host signal peptidase, whereas cleavages in the cytoplasmic side are performed by serine protease NS3. Signal cleavage at the 2K-4B site requires a prior NS3 protease-mediated cleavage at the 4A-2K site. Cleaved in post-Golgi vesicles by a host furin, releasing the mature small envelope protein M, and peptide pr. This cleavage is incomplete as up to 30% of viral particles still carry uncleaved prM. Post-translationally, N-glycosylated. In terms of processing, N-glycosylated. The excreted form is glycosylated and this is required for efficient secretion of the protein from infected cells. Acetylated by host KAT5. Acetylation modulates NS3 RNA-binding and unwinding activities and plays an important positive role for viral replication. Post-translationally, sumoylation of RNA-directed RNA polymerase NS5 increases NS5 protein stability allowing proper viral RNA replication. In terms of processing, phosphorylated on serines residues. This phosphorylation may trigger NS5 nuclear localization.

The protein resides in the virion. It localises to the host nucleus. Its subcellular location is the host cytoplasm. It is found in the host perinuclear region. The protein localises to the secreted. The protein resides in the virion membrane. It localises to the host endoplasmic reticulum membrane. Its subcellular location is the host mitochondrion. The catalysed reaction is Selective hydrolysis of -Xaa-Xaa-|-Yaa- bonds in which each of the Xaa can be either Arg or Lys and Yaa can be either Ser or Ala.. It catalyses the reaction RNA(n) + a ribonucleoside 5'-triphosphate = RNA(n+1) + diphosphate. It carries out the reaction a ribonucleoside 5'-triphosphate + H2O = a ribonucleoside 5'-diphosphate + phosphate + H(+). The enzyme catalyses ATP + H2O = ADP + phosphate + H(+). The catalysed reaction is a 5'-end (5'-triphosphoguanosine)-ribonucleoside in mRNA + S-adenosyl-L-methionine = a 5'-end (N(7)-methyl 5'-triphosphoguanosine)-ribonucleoside in mRNA + S-adenosyl-L-homocysteine. It catalyses the reaction a 5'-end (N(7)-methyl 5'-triphosphoguanosine)-ribonucleoside in mRNA + S-adenosyl-L-methionine = a 5'-end (N(7)-methyl 5'-triphosphoguanosine)-(2'-O-methyl-ribonucleoside) in mRNA + S-adenosyl-L-homocysteine + H(+). Its function is as follows. Plays a role in virus budding by binding to the cell membrane and gathering the viral RNA into a nucleocapsid that forms the core of a mature virus particle. During virus entry, may induce genome penetration into the host cytoplasm after hemifusion induced by the surface proteins. Can migrate to the cell nucleus where it modulates host functions. Overcomes the anti-viral effects of host EXOC1 by sequestering and degrading the latter through the proteasome degradation pathway. Functionally, inhibits RNA silencing by interfering with host Dicer. Prevents premature fusion activity of envelope proteins in trans-Golgi by binding to envelope protein E at pH6.0. After virion release in extracellular space, gets dissociated from E dimers. In terms of biological role, acts as a chaperone for envelope protein E during intracellular virion assembly by masking and inactivating envelope protein E fusion peptide. prM is the only viral peptide matured by host furin in the trans-Golgi network probably to avoid catastrophic activation of the viral fusion activity in acidic Golgi compartment prior to virion release. prM-E cleavage is inefficient, and many virions are only partially matured. These uncleaved prM would play a role in immune evasion. Its function is as follows. May play a role in virus budding. Exerts cytotoxic effects by activating a mitochondrial apoptotic pathway through M ectodomain. May display a viroporin activity. Functionally, binds to host cell surface receptor and mediates fusion between viral and cellular membranes. Envelope protein is synthesized in the endoplasmic reticulum in the form of heterodimer with protein prM. They play a role in virion budding in the ER, and the newly formed immature particle is covered with 60 spikes composed of heterodimer between precursor prM and envelope protein E. The virion is transported to the Golgi apparatus where the low pH causes dissociation of PrM-E heterodimers and formation of E homodimers. prM-E cleavage is inefficient, and many virions are only partially matured. These uncleaved prM would play a role in immune evasion. Involved in immune evasion, pathogenesis and viral replication. Once cleaved off the polyprotein, is targeted to three destinations: the viral replication cycle, the plasma membrane and the extracellular compartment. Essential for viral replication. Required for formation of the replication complex and recruitment of other non-structural proteins to the ER-derived membrane structures. Excreted as a hexameric lipoparticle that plays a role against host immune response. Antagonizing the complement function. Binds to the host macrophages and dendritic cells. Inhibits signal transduction originating from Toll-like receptor 3 (TLR3). Mediates complement activation, which may contribute to the pathogenesis of the vascular leakage that occurs in severe dengue disease. Activates autophagy through the AMPK/ERK/mTOR signaling pathway. Mechanistically, acts as the assembly platform for STK11-AMPK interactions and promotes STK11-AMPK interactions. In turn, promotes phosphorylation of the AMPK kinase structural domain and activates AMPK, thereby positively regulating the AMPK/ERK/mTOR signaling pathway and inducing autophagy. In terms of biological role, disrupts the host endothelial glycocalyx layer of host pulmonary microvascular endothelial cells, inducing degradation of sialic acid and shedding of heparan sulfate proteoglycans. NS1 induces expression of sialidases, heparanase, and activates cathepsin L, which activates heparanase via enzymatic cleavage. These effects are probably linked to the endothelial hyperpermeability observed in severe dengue disease. Its function is as follows. Component of the viral RNA replication complex that functions in virion assembly and antagonizes the host immune response. Functionally, required cofactor for the serine protease function of NS3. May have membrane-destabilizing activity and form viroporins. Displays three enzymatic activities: serine protease, NTPase and RNA helicase. NS3 serine protease, in association with NS2B, performs its autocleavage and cleaves the polyprotein at dibasic sites in the cytoplasm: C-prM, NS2A-NS2B, NS2B-NS3, NS3-NS4A, NS4A-2K and NS4B-NS5. NS3 RNA helicase binds RNA and unwinds dsRNA in the 3' to 5' direction. In terms of biological role, regulates the ATPase activity of the NS3 helicase activity. NS4A allows NS3 helicase to conserve energy during unwinding. Plays a role in the inhibition of the host innate immune response. Interacts with host MAVS and thereby prevents the interaction between RIGI and MAVS. In turn, IFN-beta production is impaired. Interacts with host AUP1 which mediates induction of lipophagy in host cells and facilitates production of virus progeny particles. Its function is as follows. Functions as a signal peptide for NS4B and is required for the interferon antagonism activity of the latter. Functionally, induces the formation of ER-derived membrane vesicles where the viral replication takes place. Inhibits interferon (IFN)-induced host STAT1 phosphorylation and nuclear translocation, thereby preventing the establishment of cellular antiviral state by blocking the IFN-alpha/beta pathway. Replicates the viral (+) and (-) RNA genome, and performs the capping of genomes in the cytoplasm. NS5 methylates viral RNA cap at guanine N-7 and ribose 2'-O positions. Besides its role in RNA genome replication, also prevents the establishment of cellular antiviral state by blocking the interferon-alpha/beta (IFN-alpha/beta) signaling pathway. Inhibits host TYK2 and STAT2 phosphorylation, thereby preventing activation of JAK-STAT signaling pathway. May reduce immune responses by preventing the recruitment of the host PAF1 complex to interferon-responsive genes. This is Genome polyprotein from Aedimorphus (Red guenon).